The sequence spans 219 residues: 7-cyano-7-deazaguanine synthase (219 aa).

10-20 (FSGGQDSTTCL) lines the ATP pocket. The Zn(2+) site is built by cysteine 188, cysteine 197, cysteine 200, and cysteine 203.

It belongs to the QueC family. Homodimer. It depends on Zn(2+) as a cofactor.

The catalysed reaction is 7-carboxy-7-deazaguanine + NH4(+) + ATP = 7-cyano-7-deazaguanine + ADP + phosphate + H2O + H(+). The protein operates within purine metabolism; 7-cyano-7-deazaguanine biosynthesis. Catalyzes the ATP-dependent conversion of 7-carboxy-7-deazaguanine (CDG) to 7-cyano-7-deazaguanine (preQ(0)). This Clostridium botulinum (strain Kyoto / Type A2) protein is 7-cyano-7-deazaguanine synthase.